Reading from the N-terminus, the 512-residue chain is mRNA export factor (512 aa).

The span at Met-1–Leu-15 shows a compositional bias: low complexity. Residues Met-1–Asp-243 form a disordered region. The Nuclear export signal motif lies at Ile-5–Asp-17. Phosphoserine; by host is present on residues Ser-16 and Ser-18. Acidic residues-rich tracts occupy residues Ser-16–Glu-26 and Leu-35–Glu-51. Residues Val-104–Arg-112 form an interaction with host ALYREF region. The Nuclear localization signal motif lies at Ala-110–Arg-138. The residue at position 114 (Ser-114) is a Phosphoserine; by host. A Dimethylated arginine; by host modification is found at Arg-138. The tract at residues Arg-138 to Gly-152 is RGG-box. Positions Gly-139–Gly-149 are enriched in basic residues. Arg-148 bears the Omega-N-methylarginine; by host mark. Position 150 is a dimethylated arginine; by host (Arg-150). Pro residues predominate over residues Ala-214–Pro-233. 4 residues coordinate Zn(2+): Cys-400, His-479, Cys-483, and Cys-488. The CHC2-type zinc-finger motif lies at Cys-400 to Cys-488. Positions Tyr-500–Phe-512 are important for homodimerization.

The protein belongs to the HHV-1 ICP27 protein family. As to quaternary structure, homodimer. Interacts with host RBP1; this interaction facilitates the RNA polymerase recruitment to viral transcription sites. Interacts (via the RGG box) with host ALYREF/THOC4; this interaction recruits ALYREF to viral replication compartments and probably directs viral mRNA to the TAP/NFX1 pathway. Interacts with host ALYREF2. Interacts (via the RGG box) with host SRPK1; this interaction relocalizes SRPK1 to the nucleus and seems to alter its activity. Interacts with ICP4; this interaction modulates ICP4 DNA-binding activity. Interacts with host NXF1; this interaction allows efficient export of HHV-1 early and late transcripts. In terms of processing, methylated within the RGG box possibly by host PRMT1. When hypomethylated, ICP27 is exported to the cytoplasm earlier and more rapidly. Phosphorylated.

It is found in the host cytoplasm. It localises to the host nucleus. Functionally, multifunctional regulator of the expression of viral genes that contributes to the shutoff of host protein synthesis and mediates nuclear export of viral intronless mRNAs. Early in infection, this immediate early (EI) protein mediates the inhibition of cellular splicing. This results in the accumulation of unprocessed 3'end pre-mRNAs which can't be exported from the nucleus. Cellular protein synthesis is thereby shut off early after virus infection. Later in the infection, it helps recruit cellular RNA polymerase II to viral replication sites and promotes the nuclear export of viral intronless mRNAs by interacting with mRNAs and host NXF1/TAP. ICP27 binds to NUP62 which may provide facilitated viral mRNA export and may indirectly compete with some host cell transport receptors for binding and inhibit cellular nucleocytoplasmic transport pathways. Also stimulates translation of viral transcripts. Repression of host gene expression blocks the cell cycle at the G1 phase and prevents apoptosis. Seems to silence the 3' splice site of the promyelocytic leukemia (PML) intron 7a, thereby switching PML isoforms from PML-II to PML-V. This could be linked to the accelerated mRNA export induced by ICP27 which might not provide sufficient time for PML pre-mRNA to be spliced in the nucleus. This Homo sapiens (Human) protein is mRNA export factor.